Reading from the N-terminus, the 60-residue chain is MAEKIKVKLVKSTNGRLEKHRACVRGLGLRRIGHTVEVEDTPSVRGMINKVSYLVQVEGE.

It belongs to the universal ribosomal protein uL30 family. Part of the 50S ribosomal subunit.

In Alcanivorax borkumensis (strain ATCC 700651 / DSM 11573 / NCIMB 13689 / SK2), this protein is Large ribosomal subunit protein uL30.